Here is a 262-residue protein sequence, read N- to C-terminus: Methanethiol S-methyltransferase (262 aa).

5 consecutive transmembrane segments (helical) span residues Leu22–Val42, Pro55–Val75, Ala100–Ile120, Ala134–Ile154, and Gly195–Leu215.

Belongs to the nurim family.

Its subcellular location is the membrane. It carries out the reaction methanethiol + S-adenosyl-L-methionine = dimethyl sulfide + S-adenosyl-L-homocysteine + H(+). Functionally, catalyzes the methylation of methanethiol (MeSH) to yield dimethylsulphide (DMS). The polypeptide is Methanethiol S-methyltransferase (Pseudomonas deceptionensis).